We begin with the raw amino-acid sequence, 600 residues long: MRVTTSFPLGTLRDTPSEAEIISHQLLLKAGYIRRVNSGIYAYMPLMLRVIEKISAIIEKELNSIGCTKLLLPQLHPADLWKKSERWEGYTAGEGIMFNLKDRQGKEFGLAPTHEEVITSIASETINSYKQLPQCFYQIQTKFRDEIRPRFGLMRSREFIMKDGYSFHSSQNDLASFYEKVSNAYENIFKSCGLQTVGVEADSGAIGGASSKEFMVTADAGEDSILFTQSGSYAANIEKAVSLPSQPIPLKDNIPEWLETPHQKTILEVCDNNNLDPSQIIKVVIFLAQFEGEFNVPILACIRGDQHINEVKLFNLINKLNHFNLLNLKKIEDKKTIEKNLVDLPLGFIGPDLDNNTIKAISNWEKQWTRIIDHSASDLSKFISGGNKVNFHKVFQEFSFDSKDYLIGDIRNAKKGDKISVYDDEELKEKKGIEIGHIFQLGQKYSEKLNAKFSDKDGQLKNLWMGCYGIGVTRIAQAAIEQNHDQKGICWPIHISPFEVIIIPTNLKDPIQSDLTEQIYSNFLINKIDVLLDDRNDRAGVKFKDAELIGIPFQIIIGRDSINKEVELLCRTNNTKLKISTDKLLETFISESEIMYNKKS.

The protein belongs to the class-II aminoacyl-tRNA synthetase family. ProS type 1 subfamily. In terms of assembly, homodimer.

The protein localises to the cytoplasm. The enzyme catalyses tRNA(Pro) + L-proline + ATP = L-prolyl-tRNA(Pro) + AMP + diphosphate. In terms of biological role, catalyzes the attachment of proline to tRNA(Pro) in a two-step reaction: proline is first activated by ATP to form Pro-AMP and then transferred to the acceptor end of tRNA(Pro). As ProRS can inadvertently accommodate and process non-cognate amino acids such as alanine and cysteine, to avoid such errors it has two additional distinct editing activities against alanine. One activity is designated as 'pretransfer' editing and involves the tRNA(Pro)-independent hydrolysis of activated Ala-AMP. The other activity is designated 'posttransfer' editing and involves deacylation of mischarged Ala-tRNA(Pro). The misacylated Cys-tRNA(Pro) is not edited by ProRS. This chain is Proline--tRNA ligase, found in Prochlorococcus marinus (strain AS9601).